A 158-amino-acid chain; its full sequence is Large ribosomal subunit protein uL16 (158 aa).

This sequence belongs to the universal ribosomal protein uL16 family. Part of the 50S ribosomal subunit.

In terms of biological role, binds 23S rRNA and is also seen to make contacts with the A and possibly P site tRNAs. This Synechococcus sp. (strain CC9605) protein is Large ribosomal subunit protein uL16.